Consider the following 347-residue polypeptide: Phenylalanine--tRNA ligase alpha subunit (347 aa).

Glu-262 contributes to the Mg(2+) binding site.

It belongs to the class-II aminoacyl-tRNA synthetase family. Phe-tRNA synthetase alpha subunit type 1 subfamily. As to quaternary structure, tetramer of two alpha and two beta subunits. Requires Mg(2+) as cofactor.

The protein localises to the cytoplasm. It catalyses the reaction tRNA(Phe) + L-phenylalanine + ATP = L-phenylalanyl-tRNA(Phe) + AMP + diphosphate + H(+). The sequence is that of Phenylalanine--tRNA ligase alpha subunit from Roseiflexus sp. (strain RS-1).